The sequence spans 375 residues: N-acetylneuraminate epimerase (375 aa).

The first 22 residues, 1 to 22 (MKLTKTALCTALFATFTFSANA), serve as a signal peptide directing secretion. 7 Kelch repeats span residues 43–87 (TVYV…AAVD), 89–140 (KLYV…ASHG), 142–176 (KVYILGGSNLSIFNGFFQDNVAAGEDKGKKDEIVA), 177–222 (AYFD…TIQG), 225–273 (LVVV…LAGA), 295–344 (KQFK…SYNN), and 346–375 (VLLIGGETDGGKALTSVKAISYDGKKLTVE). The Proton acceptor role is filled by glutamate 231.

The protein belongs to the NanM family. In terms of assembly, homodimer.

The protein localises to the periplasm. It catalyses the reaction N-acetyl-alpha-neuraminate = N-acetyl-beta-neuraminate. Functionally, converts alpha-N-acetylneuranimic acid (Neu5Ac) to the beta-anomer, accelerating the equilibrium between the alpha- and beta-anomers. Probably facilitates sialidase-negative bacteria to compete successfully for limited amounts of extracellular Neu5Ac, which is likely taken up in the beta-anomer. In addition, the rapid removal of sialic acid from solution might be advantageous to the bacterium to damp down host responses. This is N-acetylneuraminate epimerase from Haemophilus influenzae (strain 86-028NP).